A 507-amino-acid polypeptide reads, in one-letter code: E3 ubiquitin-protein ligase makorin-3 (507 aa).

Over residues 1–21 (MEEPAAPSEAHEAAGAQAGAE) the composition is skewed to low complexity. Disordered regions lie at residues 1–48 (MEEP…DSAL) and 69–89 (RGGL…PLPS). A C3H1-type 1 zinc finger spans residues 95–122 (WTKQIICRYYIHGQCKEGENCRYSHDLS). The segment at 126 to 149 (MATEGGVSPPGASAGGGPSTAAHI) is disordered. The C3H1-type 2 zinc-finger motif lies at 238 to 265 (GSGLRFCYYASRGVCFRGESCMYLHGDI). Residues 266 to 293 (CDMCGLQTLHPMDAAQREEHMRACIEAH) form a makorin-type Cys-His region. The segment at 311-365 (CGICMEVVYEKANPNDRRFGILSNCNHSFCIRCIRRWRSARQFENRIVKSCPQCR) adopts an RING-type zinc-finger fold. A C3H1-type 3 zinc finger spans residues 394–423 (AMSNKACRYFAEGRGNCPFGDTCFYKHEYP).

As to expression, ubiquitous.

It is found in the nucleus. The enzyme catalyses S-ubiquitinyl-[E2 ubiquitin-conjugating enzyme]-L-cysteine + [acceptor protein]-L-lysine = [E2 ubiquitin-conjugating enzyme]-L-cysteine + N(6)-ubiquitinyl-[acceptor protein]-L-lysine.. The protein operates within protein modification; protein ubiquitination. In terms of biological role, E3 ubiquitin ligase catalyzing the covalent attachment of ubiquitin moieties onto substrate proteins. Acts as a key developmental timer that helps ensure puberty begins at the appropriate age, by inhibiting premature activation of the reproductive hormone cascade. Epigenetically regulates GNRH1 transcription by disrupting the binding of methyl-DNA binding protein 3/MBD3 to the promoter of GNRH1. Mechanistically, mediates the non-proteolytic ubiquitination of MBD3 at multiple sites with 'Lys27' ubiquitin linkages and thereby regulates the methylation status of the genome, including GNRH1 promoter. Modulates the stability and translation of GNRH1 mRNA by mediating the non-proteolytic ubiquitination of PABP family members PABPC1, PABPC3 and PABPC4 at multiple sites. Also participates in the maintenance of genomic and epigenomic stability by regulating the abundance of APEX2 via 'Lys-48'-linked ubiquitination. In Homo sapiens (Human), this protein is E3 ubiquitin-protein ligase makorin-3 (MKRN3).